Consider the following 301-residue polypeptide: Glycine--tRNA ligase alpha subunit (301 aa).

It belongs to the class-II aminoacyl-tRNA synthetase family. Tetramer of two alpha and two beta subunits.

It is found in the cytoplasm. It catalyses the reaction tRNA(Gly) + glycine + ATP = glycyl-tRNA(Gly) + AMP + diphosphate. The polypeptide is Glycine--tRNA ligase alpha subunit (Shewanella frigidimarina (strain NCIMB 400)).